We begin with the raw amino-acid sequence, 261 residues long: Segregation and condensation protein A (261 aa).

This sequence belongs to the ScpA family. In terms of assembly, component of a cohesin-like complex composed of ScpA, ScpB and the Smc homodimer, in which ScpA and ScpB bind to the head domain of Smc. The presence of the three proteins is required for the association of the complex with DNA.

It is found in the cytoplasm. Participates in chromosomal partition during cell division. May act via the formation of a condensin-like complex containing Smc and ScpB that pull DNA away from mid-cell into both cell halves. The protein is Segregation and condensation protein A of Ligilactobacillus salivarius (strain UCC118) (Lactobacillus salivarius).